We begin with the raw amino-acid sequence, 325 residues long: Putative carboxypeptidase YocD (325 aa).

Catalysis depends on Ser-111, which acts as the Nucleophile. Active-site charge relay system residues include Glu-228 and His-296.

It belongs to the peptidase S66 family.

The chain is Putative carboxypeptidase YocD (yocD) from Bacillus subtilis (strain 168).